The chain runs to 396 residues: Putative cyclin-B3-1 (396 aa).

The segment at 1 to 98 is disordered; the sequence is MLRDGNKQSK…KVLDVTAKPK (98 aa). Residues 21–32 show a composition bias toward polar residues; the sequence is KTTVKTSLQNRS. A compositionally biased stretch (low complexity) spans 39-57; the sequence is VGRSKSRSISSIPSSAVAS. Positions 76 to 85 are enriched in polar residues; sequence GESSSSGNKD.

This sequence belongs to the cyclin family. Cyclin AB subfamily.

The protein is Putative cyclin-B3-1 (CYCB3-1) of Arabidopsis thaliana (Mouse-ear cress).